We begin with the raw amino-acid sequence, 961 residues long: IQ motif and SEC7 domain-containing protein 1 (961 aa).

A disordered region spans residues 21 to 113 (SGVEGEAPSS…SLSESYELSS (93 aa)). The segment covering 29 to 38 (SSETGTSLDS) has biased composition (polar residues). 3 positions are modified to phosphoserine: Ser-88, Ser-104, and Ser-106. The region spanning 133-162 (TRHAARTIQTAFRQYQMNKNFERLRSSMSE) is the IQ domain. Residues Ser-179, Ser-247, and Ser-251 each carry the phosphoserine modification. Disordered regions lie at residues 263–291 (SEEV…HRKL), 310–332 (LSPP…DLRL), and 347–515 (KEDK…DSPA). Over residues 272–291 (ARARDTEPKPGLHGMDHRKL) the composition is skewed to basic and acidic residues. 2 stretches are compositionally biased toward basic and acidic residues: residues 364–374 (ERPEPRLRVEH) and 428–444 (LPRE…RPLE). Residues 469–487 (DSINSTSNSNDTINCSSES) are compositionally biased toward low complexity. Ser-510 and Ser-513 each carry phosphoserine. Residues 515-708 (AFSNDVIRKR…IGIYERIRKR (194 aa)) enclose the SEC7 domain. In terms of domain architecture, PH spans 772-864 (HQREIFLFND…LRESVAEVQE (93 aa)). Positions 846 to 877 (QDRKKFTDDLRESVAEVQEMEKHRIESELEKQ) form a coiled coil. Ser-890 carries the post-translational modification Phosphoserine. Tyr-909 carries the post-translational modification Phosphotyrosine. The segment at 920–961 (LSSSLRDLSEAGKRGRRSSAGSLESNVEFQPFQPPQPPVLCS) is disordered. Phosphoserine occurs at positions 922 and 923. Residues 938-947 (SAGSLESNVE) show a composition bias toward polar residues. Residues 951 to 961 (FQPPQPPVLCS) are compositionally biased toward pro residues.

The protein belongs to the BRAG family. Interacts with ARF1 and ARF6. Interacts with GRIA2; the interaction is required for ARF6 activation. In terms of tissue distribution, expressed in hippocampus.

The protein resides in the cytoplasm. It localises to the nucleus. Its subcellular location is the postsynaptic density. It is found in the cytoplasmic vesicle. The protein localises to the secretory vesicle. The protein resides in the synaptic vesicle. Guanine nucleotide exchange factor for ARF1 and ARF6. Guanine nucleotide exchange factor activity is enhanced by lipid binding. Accelerates GTP binding by ARFs of all three classes. Guanine nucleotide exchange protein for ARF6, mediating internalization of beta-1 integrin. Involved in neuronal development. In neurons, plays a role in the control of vesicle formation by endocytoc cargo. Upon long term depression, interacts with GRIA2 and mediates the activation of ARF6 to internalize synaptic AMPAR receptors. In Mus musculus (Mouse), this protein is IQ motif and SEC7 domain-containing protein 1 (Iqsec1).